The following is a 145-amino-acid chain: Hemoglobin subunit beta (145 aa).

The region spanning 1–145 (MLTAEEKAAV…VANALAHRYH (145 aa)) is the Globin domain. A Phosphothreonine modification is found at Thr-11. Ser-43 is subject to Phosphoserine. Lys-58 is modified (N6-acetyllysine). His-62 contacts heme b. Residue Lys-81 is modified to N6-acetyllysine. Position 91 (His-91) interacts with heme b. Cys-92 carries the S-nitrosocysteine modification.

It belongs to the globin family. In terms of assembly, heterotetramer of two alpha chains and two beta chains. As to expression, red blood cells.

Involved in oxygen transport from the lung to the various peripheral tissues. This Tragelaphus strepsiceros (Greater kudu) protein is Hemoglobin subunit beta (HBB).